A 95-amino-acid chain; its full sequence is Large ribosomal subunit protein bL25 (95 aa).

This sequence belongs to the bacterial ribosomal protein bL25 family. As to quaternary structure, part of the 50S ribosomal subunit; part of the 5S rRNA/L5/L18/L25 subcomplex. Contacts the 5S rRNA. Binds to the 5S rRNA independently of L5 and L18.

This is one of the proteins that binds to the 5S RNA in the ribosome where it forms part of the central protuberance. The polypeptide is Large ribosomal subunit protein bL25 (Shewanella oneidensis (strain ATCC 700550 / JCM 31522 / CIP 106686 / LMG 19005 / NCIMB 14063 / MR-1)).